Consider the following 742-residue polypeptide: Conidiogenone synthase (742 aa).

A terpene cyclase region spans residues 1–332; it reads MGETIADVYA…SLCVPRYFKV (332 aa). D97 is a Mg(2+) binding site. Residues D97, 190–193, N234, 238–242, and 328–329 each bind substrate; these read RIVD, SWDKE, and RY. The DDXXD 1 signature appears at 97-101; that stretch reads DDETD. The short motif at 234–242 is the NSE/DTE element; the sequence is NDLFSWDKE. Residues 333-742 form a prenyltransferase region; it reads ERNPYKDHLE…LRAMEEASQK (410 aa). Residues K414, R417, and H446 each coordinate isopentenyl diphosphate. Positions 453 and 457 each coordinate Mg(2+). The short motif at 453-457 is the DDXXD 2 element; it reads DDIQD. R462 lines the dimethylallyl diphosphate pocket. Position 463 (R463) interacts with isopentenyl diphosphate. Residues K539, T540, Q575, N582, K592, and K602 each coordinate dimethylallyl diphosphate. Residues 701–724 form a disordered region; it reads EAHKSDSAWKVNQRRAWKGSQKNG.

This sequence in the N-terminal section; belongs to the terpene synthase family. It in the C-terminal section; belongs to the FPP/GGPP synthase family. As to quaternary structure, hexamer. Mg(2+) serves as cofactor.

It carries out the reaction isopentenyl diphosphate + (2E,6E)-farnesyl diphosphate = (2E,6E,10E)-geranylgeranyl diphosphate + diphosphate. The protein operates within secondary metabolite biosynthesis; terpenoid biosynthesis. Functionally, bifunctional terpene synthase; part of the gene cluster that mediates the biosynthesis of conidiogenone, a diterpene known to induce the conidiation. The bifunctional terpene synthase PrDS converts isopentenyl diphosphate (IPP) and dimethylallyl diphosphate (DMAPP) into deoxyconidiogenol. The C-terminal prenyltransferase (PT) domain of PrDS catalyzes formation of GGPP, whereas the N-terminal terpene cyclase (TC) domain catalyzes the cyclization of GGPP into deoxyconidiogenol. The cytochrome P450 monooxygenase PrP450 then catalyzes two rounds of oxidation to furnish conidiogenone. This Penicillium roqueforti (strain FM164) protein is Conidiogenone synthase.